The following is a 690-amino-acid chain: Glycine--tRNA ligase beta subunit (690 aa).

This sequence belongs to the class-II aminoacyl-tRNA synthetase family. As to quaternary structure, tetramer of two alpha and two beta subunits.

It localises to the cytoplasm. The enzyme catalyses tRNA(Gly) + glycine + ATP = glycyl-tRNA(Gly) + AMP + diphosphate. The chain is Glycine--tRNA ligase beta subunit from Pediococcus pentosaceus (strain ATCC 25745 / CCUG 21536 / LMG 10740 / 183-1w).